The primary structure comprises 810 residues: Phenylalanine--tRNA ligase beta subunit (810 aa).

One can recognise a tRNA-binding domain in the interval 39 to 150; the sequence is RTWANGVVVG…ENLPLGSDVR (112 aa). A B5 domain is found at 411 to 495; the sequence is TWSRSIFLRL…RLYGYDNFCD (85 aa). Mg(2+) is bound by residues D473, D479, E482, and E483. An FDX-ACB domain is found at 716–809; that stretch reads STYPASDRDI…LVEKFGVNLR (94 aa).

The protein belongs to the phenylalanyl-tRNA synthetase beta subunit family. Type 1 subfamily. As to quaternary structure, tetramer of two alpha and two beta subunits. Requires Mg(2+) as cofactor.

Its subcellular location is the cytoplasm. The enzyme catalyses tRNA(Phe) + L-phenylalanine + ATP = L-phenylalanyl-tRNA(Phe) + AMP + diphosphate + H(+). This chain is Phenylalanine--tRNA ligase beta subunit, found in Trichormus variabilis (strain ATCC 29413 / PCC 7937) (Anabaena variabilis).